A 312-amino-acid chain; its full sequence is Type II methyltransferase M.NgoMIV (312 aa).

Positions Phe-3–Glu-311 constitute an SAM-dependent MTase C5-type domain. Residue Cys-74 is part of the active site.

This sequence belongs to the class I-like SAM-binding methyltransferase superfamily. C5-methyltransferase family.

The enzyme catalyses a 2'-deoxycytidine in DNA + S-adenosyl-L-methionine = a 5-methyl-2'-deoxycytidine in DNA + S-adenosyl-L-homocysteine + H(+). In terms of biological role, a methylase, recognizes the double-stranded sequence 5'-GCCGGC-3', methylates C-2 on both strands, and protects the DNA from cleavage by the NgoMIV endonuclease. The protein is Type II methyltransferase M.NgoMIV (ngoMIVM) of Neisseria gonorrhoeae.